A 35-amino-acid chain; its full sequence is Jingzhaotoxin F5-21.66 (35 aa).

Disulfide bonds link Cys2/Cys16, Cys9/Cys21, and Cys15/Cys29.

The protein belongs to the neurotoxin 10 (Hwtx-1) family. 48 (Jztx-F5) subfamily. As to expression, expressed by the venom gland.

Its subcellular location is the secreted. Functionally, probable ion channel inhibitor. The chain is Jingzhaotoxin F5-21.66 from Chilobrachys guangxiensis (Chinese earth tiger tarantula).